The primary structure comprises 369 residues: C-C chemokine receptor type 9 (369 aa).

The Extracellular portion of the chain corresponds to 1-48 (MMPTELTSLIPGMFDDFSYDSTASTDDYMNLNFSSFFCKKNNVRQFAS). Asparagine 32 is a glycosylation site (N-linked (GlcNAc...) asparagine). 2 cysteine pairs are disulfide-bonded: cysteine 38–cysteine 289 and cysteine 119–cysteine 198. The helical transmembrane segment at 49 to 74 (HFLPPLYWLVFIVGTLGNSLVILVYW) threads the bilayer. Residues 75-85 (YCTRVKTMTDM) are Cytoplasmic-facing. Residues 86-109 (FLLNLAIADLLFLATLPFWAIAAA) traverse the membrane as a helical segment. At 110–120 (GQWMFQTFMCK) the chain is on the extracellular side. Residues 121-150 (VVNSMYKMNFYSCVLLIMCISVDRYIAIVQ) form a helical membrane-spanning segment. The Cytoplasmic segment spans residues 151 to 159 (AMKAQVWRQ). A helical membrane pass occupies residues 160 to 185 (KRLLYSKMVCITIWVMAAVLCTPEIL). The Extracellular segment spans residues 186-208 (YSQVSGESGIATCTMVYPKDKNA). The chain crosses the membrane as a helical span at residues 209–243 (KLKSAVLILKVTLGFFLPFMVMAFCYTIIIHTLVQ). Residues 244–248 (AKKSS) lie on the Cytoplasmic side of the membrane. Residues 249-283 (KHKALKVTITVLTVFIMSQFPYNSILVVQAVDAYA) form a helical membrane-spanning segment. At 284 to 290 (MFISNCT) the chain is on the extracellular side. The chain crosses the membrane as a helical span at residues 291 to 321 (ISTNIDICFQVTQTIAFFHSCLNPVLYVFVG). The Cytoplasmic portion of the chain corresponds to 322–369 (ERFRRDLVKTLKNLGCISQAQWVSFTRREGSLKLSSMLLETTSGALSL).

This sequence belongs to the G-protein coupled receptor 1 family. In terms of tissue distribution, highly expressed in the thymus and low in lymph nodes and spleen.

The protein localises to the cell membrane. Functionally, receptor for chemokine SCYA25/TECK. Subsequently transduces a signal by increasing the intracellular calcium ions level. This is C-C chemokine receptor type 9 (Ccr9) from Mus musculus (Mouse).